The sequence spans 300 residues: MYNPRCKDLDRDYFPSYHTTRFQDQPEPNLAVLEHFVRVTKQHGRELTEKQGITVDHLRYGEGRQLVDVFYSEKTTNQAPLFVFVHGGYWQEMDMSMSCSIVGPLVRRGYRVAVMDYNLCPQVTLEQLMTQFTHFLNWIFDYTEMTKVSSLTFAGHSAGAHLLAQILMRPNVITAQRSKMVWALIFLCGVYDLRELSNLESVNPKNILGLNERNIESVSPMLWEYTDVTVWNSTKIYVVAAEHDSTTFIEQSRHYADVLRKKGYKASFTLFKGYDHFDIIEETAIDDSDVSRFLRNIEIE.

Positions 86 to 90 match the HGGXW motif; sequence HGGYW. Ser157 (nucleophile) is an active-site residue. Catalysis depends on residues Asp244 and His276.

Belongs to the kynurenine formamidase family. In terms of assembly, homodimer.

The catalysed reaction is N-formyl-L-kynurenine + H2O = L-kynurenine + formate + H(+). It participates in amino-acid degradation; L-tryptophan degradation via kynurenine pathway; L-kynurenine from L-tryptophan: step 2/2. In terms of biological role, catalyzes the hydrolysis of N-formyl-L-kynurenine to L-kynurenine, the second step in the kynurenine pathway of tryptophan degradation. Required for elimination of toxic metabolites. This chain is Kynurenine formamidase (KFase), found in Drosophila melanogaster (Fruit fly).